Consider the following 150-residue polypeptide: D-aminoacyl-tRNA deacylase (150 aa).

The Gly-cisPro motif, important for rejection of L-amino acids motif lies at 138 to 139; that stretch reads GP.

This sequence belongs to the DTD family. In terms of assembly, homodimer.

It is found in the cytoplasm. The enzyme catalyses glycyl-tRNA(Ala) + H2O = tRNA(Ala) + glycine + H(+). It carries out the reaction a D-aminoacyl-tRNA + H2O = a tRNA + a D-alpha-amino acid + H(+). Its function is as follows. An aminoacyl-tRNA editing enzyme that deacylates mischarged D-aminoacyl-tRNAs. Also deacylates mischarged glycyl-tRNA(Ala), protecting cells against glycine mischarging by AlaRS. Acts via tRNA-based rather than protein-based catalysis; rejects L-amino acids rather than detecting D-amino acids in the active site. By recycling D-aminoacyl-tRNA to D-amino acids and free tRNA molecules, this enzyme counteracts the toxicity associated with the formation of D-aminoacyl-tRNA entities in vivo and helps enforce protein L-homochirality. The chain is D-aminoacyl-tRNA deacylase from Bacteroides fragilis (strain YCH46).